Here is a 329-residue protein sequence, read N- to C-terminus: Ficolin-2 (329 aa).

Positions 1–29 (MELGGAAGALGPSGPLLVCLCFGTLAAQA) are cleaved as a signal peptide. The Collagen-like domain occupies 52 to 111 (GCPGLPGAPGLKGETGAAGLKGERGLPGVPGKAGPAGPKGSTGAQGEKGARGEKGESGQL). Residues 64-113 (GETGAAGLKGERGLPGVPGKAGPAGPKGSTGAQGEKGARGEKGESGQLHS) form a disordered region. The span at 77-90 (LPGVPGKAGPAGPK) shows a compositional bias: low complexity. One can recognise a Fibrinogen C-terminal domain in the interval 112 to 329 (HSCATGPRTC…KVSEMKLRLT (218 aa)). Disulfide bonds link cysteine 114–cysteine 142 and cysteine 121–cysteine 149. Ca(2+) contacts are provided by aspartate 265, aspartate 267, serine 269, and serine 271. An intrachain disulfide couples cysteine 273 to cysteine 286. The N-linked (GlcNAc...) asparagine glycan is linked to asparagine 316.

The protein belongs to the ficolin lectin family. In terms of assembly, homotrimer. Interacts with elastin. Interacts with MASP1 and MASP2.

The protein localises to the secreted. May function in innate immunity through activation of the lectin complement pathway. Calcium-dependent and GlcNAc-binding lectin. The chain is Ficolin-2 (FCN2) from Bos taurus (Bovine).